A 164-amino-acid chain; its full sequence is C-type lectin 1 (164 aa).

The signal sequence occupies residues Met-1–Ala-23. 3 cysteine pairs are disulfide-bonded: Cys-27–Cys-38, Cys-55–Cys-154, and Cys-129–Cys-146. Positions Tyr-34–Gln-155 constitute a C-type lectin domain. N-linked (GlcNAc...) asparagine glycans are attached at residues Asn-35 and Asn-109. Positions Glu-119–Asn-121 match the Mannose-binding motif. 3 residues coordinate Ca(2+): Glu-127, Asn-142, and Asp-143.

It belongs to the true venom lectin family. Expressed by the venom gland.

The protein resides in the secreted. In terms of biological role, mannose-binding lectin which recognizes specific carbohydrate structures and agglutinates a variety of animal cells by binding to cell-surface glycoproteins and glycolipids. May be a calcium-dependent lectin. This chain is C-type lectin 1, found in Hydrophis hardwickii (Hardwick's spine-bellied seasnake).